The primary structure comprises 431 residues: MKNYIEIVDVYARQILDSRCNPTVEVEVELEDGTVGVAAVPSGASTGAFEAVELRDGDKSKYLGKGVLKAVDNVNTIIADELVGMNVLDQVAIDKTMIELDGTDNKAKLGANAMLGVSLACAKAAANFLGMSLYQYIGGVNAKVLPVPMMNIINGGKHADNNVDLQEFMIMPAGAPSFSEALRMCSEVYHALKSTLKSQGYDTGVGDEGGFAPNLKSNEEAIIVIIEAIKKAGYTPGKDIFIALDPASSEIFEDGKYNLAGEGRVLTPEEMANYYVELAEKYPIISIEDGMAEEDWDGWKILTEKIGKKVQLVGDDLFVTNTERLAKGIKLGVANSILIKLNQIGTLTETLNAIEMAERAGYTAVVSHRSGETEDTTIADLVVAVNAGQIKTGAPARSERVAKYNQLLRIEEELNDMGEYRGLKAFYNINK.

Gln-166 is a binding site for (2R)-2-phosphoglycerate. Residue Glu-208 is the Proton donor of the active site. The Mg(2+) site is built by Asp-245, Glu-288, and Asp-315. (2R)-2-phosphoglycerate is bound by residues Lys-340, Arg-369, Ser-370, and Lys-391. Catalysis depends on Lys-340, which acts as the Proton acceptor.

The protein belongs to the enolase family. The cofactor is Mg(2+).

The protein localises to the cytoplasm. It localises to the secreted. The protein resides in the cell surface. The enzyme catalyses (2R)-2-phosphoglycerate = phosphoenolpyruvate + H2O. It participates in carbohydrate degradation; glycolysis; pyruvate from D-glyceraldehyde 3-phosphate: step 4/5. Catalyzes the reversible conversion of 2-phosphoglycerate (2-PG) into phosphoenolpyruvate (PEP). It is essential for the degradation of carbohydrates via glycolysis. This chain is Enolase, found in Clostridium botulinum (strain 657 / Type Ba4).